Reading from the N-terminus, the 1189-residue chain is Disabled homolog 2-interacting protein (1189 aa).

Residues 1-75 are disordered; it reads MSAGGSARKS…EPSAATPFRV (75 aa). Residues 20–38 are compositionally biased toward basic residues; the sequence is LLRRPRLQRQRSRSRSRTR. Residues 39 to 49 show a composition bias toward basic and acidic residues; that stretch reads PARESPQERPG. In terms of domain architecture, PH spans 101–202; sequence SFRHILPGFR…WMENLRRAVH (102 aa). One can recognise a C2 domain in the interval 193-311; it reads WMENLRRAVH…AGRQFVEKWY (119 aa). The 209-residue stretch at 387–595 folds into the Ras-GAP domain; it reads GKVKDFLTDL…TNMQRFLLEI (209 aa). The interval 646–943 is necessary for interaction with AKT1; that stretch reads LRDVHTALST…RTPPNLLSTL (298 aa). Positions 653–668 are enriched in polar residues; sequence LSTPGSGQLPGTNDLA. Disordered stretches follow at residues 653–678 and 715–742; these read LSTPGSGQLPGTNDLASTPGSGSSSI and RSSGVQPSPARSSSYSEANEPDLQMANG. Residues 669-678 show a composition bias toward low complexity; it reads STPGSGSSSI. Positions 715–731 are enriched in polar residues; it reads RSSGVQPSPARSSSYSE. S728 is subject to Phosphoserine; by MAP3K5 and RIPK1. S747 carries the post-translational modification Phosphoserine. Disordered regions lie at residues 803–823, 843–865, 895–998, 1015–1035, and 1164–1189; these read AGQTPTTPGTSEGAPGRPQLL, PRGLGDSGSEGHSSLSSHSNSEE, SLTE…SPNA, EDEGLGPDPPHRDRLRSKDEL, and RNGISPTNPTKLQITENGEFRNSSNC. The segment covering 852-865 has biased composition (low complexity); it reads EGHSSLSSHSNSEE. Residues 919–931 are compositionally biased toward pro residues; sequence QPPPPPPPPPPAP. Composition is skewed to polar residues over residues 938-955 and 966-976; these read NLLSTLQYPRPSSGTLAS and RLRQQSSSSKG. Phosphoserine is present on residues S978 and S995. Basic and acidic residues predominate over residues 1023-1035; sequence PPHRDRLRSKDEL. The stretch at 1026–1159 forms a coiled coil; the sequence is RDRLRSKDEL…SALTQLKERY (134 aa).

On plasma membrane, exists in an inactive form complexed with TNFR1; in response to TNF-alpha, dissociates from TNFR1 complex, translocates to cytoplasm and forms part of an intracellular signaling complex comprising TRADD, RIPK1, TRAF2 and MAP3K5. Interacts with DAB1. Interacts (via NPXY motif) with DAB2 (via PID domain). Interacts (via PH domain) with ERN1. Part of a cytoplasmic complex made of HIPK1, DAB2IP and MAP3K5 in response to TNF-alpha; this complex formation promotes MAP3K5-JNK activation and subsequent apoptosis. Interacts (via N-terminal domain) with JAK2; the interaction occurs in a IFNG/IFN-gamma-dependent manner and inhibits JAK2 autophosphorylation activity. Interacts (via C2 domain) with GSK3B; the interaction stimulates GSK3B kinase activation. Interacts (via C2 domain) with PPP2CA. Interacts (via proline-rich motif) with a regulatory p85 subunit (via SH3 domain) of the PI3K complex; the interaction inhibits the PI3K-AKT complex activity in a TNF-alpha-dependent manner in prostate cancer (PCa) cells. Interacts with AKT1; the interaction is increased in a TNF-alpha-induced manner. Interacts (via C2 domain and active form preferentially) with KDR/VEGFR2 (tyrosine-phosphorylated active form preferentially); the interaction occurs at the late phase of VEGFA response and inhibits KDR/VEGFR2 activity. Interacts (via N-terminus C2 domain) with MAP3K5 ('Ser-966' dephosphorylated form preferentially); the interaction occurs in a TNF-alpha-induced manner. Interacts (via Ras-GAP domain) with the catalytic subunit of protein phosphatase PP2A; the interaction occurs in resting endothelial cells, is further enhanced by TNF-alpha stimulation and is required to bridge PP2A to MAP3K5. Interacts (via C-terminus PER domain) with TRAF2 (via zinc fingers); the interaction occurs in a TNF-alpha-dependent manner. Interacts with 14-3-3 proteins; the interaction occurs in a TNF-alpha-dependent manner. Interacts (via Ras-GAP domain) with RIPK1 (via kinase domain); the interaction occurs in a TNF-alpha-dependent manner. Interacts with RAB40C; acts as a GAP for RAB40C. In terms of processing, in response to TNF-alpha-induction, phosphorylated at Ser-728; phosphorylation leads to a conformational change, and thus, increases its association with 14-3-3 proteins, MAP3K5, RIPK1 and TRAF2 in endothelial cells; also stimulates regulatory p85 subunit sequestring and PI3K-p85 complex activity inhibition. In terms of tissue distribution, expressed in endothelial and vascular smooth muscle cells (VSMCs). Expressed in prostate epithelial but poorly in prostate cancer cells. Poorly expressed in medulloblastoma cells compared to cerebellar precursor proliferating progenitor cells (at protein level). Low expression in prostate. Down-regulated in prostate cancer.

The protein localises to the cytoplasm. It is found in the cell membrane. The protein resides in the membrane. It localises to the cell projection. Its subcellular location is the dendrite. Functions as a scaffold protein implicated in the regulation of a large spectrum of both general and specialized signaling pathways. Involved in several processes such as innate immune response, inflammation and cell growth inhibition, apoptosis, cell survival, angiogenesis, cell migration and maturation. Also plays a role in cell cycle checkpoint control; reduces G1 phase cyclin levels resulting in G0/G1 cell cycle arrest. Mediates signal transduction by receptor-mediated inflammatory signals, such as the tumor necrosis factor (TNF), interferon (IFN) or lipopolysaccharide (LPS). Modulates the balance between phosphatidylinositol 3-kinase (PI3K)-AKT-mediated cell survival and apoptosis stimulated kinase (MAP3K5)-JNK signaling pathways; sequesters both AKT1 and MAP3K5 and counterbalances the activity of each kinase by modulating their phosphorylation status in response to pro-inflammatory stimuli. Acts as a regulator of the endoplasmic reticulum (ER) unfolded protein response (UPR) pathway; specifically involved in transduction of the ER stress-response to the JNK cascade through ERN1. Mediates TNF-alpha-induced apoptosis activation by facilitating dissociation of inhibitor 14-3-3 from MAP3K5; recruits the PP2A phosphatase complex which dephosphorylates MAP3K5 on 'Ser-966', leading to the dissociation of 13-3-3 proteins and activation of the MAP3K5-JNK signaling pathway in endothelial cells. Also mediates TNF/TRAF2-induced MAP3K5-JNK activation, while it inhibits CHUK-NF-kappa-B signaling. Acts a negative regulator in the IFN-gamma-mediated JAK-STAT signaling cascade by inhibiting smooth muscle cell (VSMCs) proliferation and intimal expansion, and thus, prevents graft arteriosclerosis (GA). Acts as a GTPase-activating protein (GAP) for the ADP ribosylation factor 6 (ARF6), Ras and RAB40C. Promotes hydrolysis of the ARF6-bound GTP and thus, negatively regulates phosphatidylinositol 4,5-bisphosphate (PIP2)-dependent TLR4-TIRAP-MyD88 and NF-kappa-B signaling pathways in endothelial cells in response to lipopolysaccharides (LPS). Binds specifically to phosphatidylinositol 4-phosphate (PtdIns4P) and phosphatidylinositol 3-phosphate (PtdIns3P). In response to vascular endothelial growth factor (VEGFA), acts as a negative regulator of the VEGFR2-PI3K-mediated angiogenic signaling pathway by inhibiting endothelial cell migration and tube formation. In the developing brain, promotes both the transition from the multipolar to the bipolar stage and the radial migration of cortical neurons from the ventricular zone toward the superficial layer of the neocortex in a glial-dependent locomotion process. Probable downstream effector of the Reelin signaling pathway; promotes Purkinje cell (PC) dendrites development and formation of cerebellar synapses. Also functions as a tumor suppressor protein in prostate cancer progression; prevents cell proliferation and epithelial-to-mesenchymal transition (EMT) through activation of the glycogen synthase kinase-3 beta (GSK3B)-induced beta-catenin and inhibition of PI3K-AKT and Ras-MAPK survival downstream signaling cascades, respectively. This chain is Disabled homolog 2-interacting protein, found in Homo sapiens (Human).